Consider the following 322-residue polypeptide: AA9 family lytic polysaccharide monooxygenase B (322 aa).

A signal peptide spans 1–17; the sequence is MFSKSIIAASLLTAVTA. His-18 contributes to the Cu(2+) binding site. Residues Asn-53 and Asn-68 are each glycosylated (N-linked (GlcNAc...) asparagine). Residues Cys-56 and Cys-173 are joined by a disulfide bond. Cu(2+) is bound at residue His-87. N-linked (GlcNAc...) asparagine glycosylation is found at Asn-121 and Asn-133. 2 residues coordinate O2: His-159 and Gln-168. Tyr-170 lines the Cu(2+) pocket. An N-linked (GlcNAc...) asparagine glycan is attached at Asn-197.

It belongs to the polysaccharide monooxygenase AA9 family. Cu(2+) serves as cofactor.

Its subcellular location is the secreted. It carries out the reaction [(1-&gt;4)-beta-D-glucosyl]n+m + reduced acceptor + O2 = 4-dehydro-beta-D-glucosyl-[(1-&gt;4)-beta-D-glucosyl]n-1 + [(1-&gt;4)-beta-D-glucosyl]m + acceptor + H2O.. In terms of biological role, lytic polysaccharide monooxygenase (LPMO) that depolymerizes crystalline and amorphous polysaccharides via the oxidation of scissile alpha- or beta-(1-4)-glycosidic bonds, yielding C1 and C4 oxidation products. Catalysis by LPMOs requires the reduction of the active-site copper from Cu(II) to Cu(I) by a reducing agent and H(2)O(2) or O(2) as a cosubstrate. In Botryotinia fuckeliana (strain B05.10) (Noble rot fungus), this protein is AA9 family lytic polysaccharide monooxygenase B.